The primary structure comprises 351 residues: Inactive RHOMBOID-like protein 8 (351 aa).

Helical transmembrane passes span 48-68 (TWLVSVFVLLQIVLFAVTMGV), 130-150 (WLHSGLFHLFINLGSLIFVGI), 160-180 (RIAVIYFLSGIMGSLFAVLFV), 183-203 (IPSISSGAAFFGLIGAMLSAL), 216-236 (ALAIIFTIFTVNFLIGFLPFI), 239-259 (FANIGGFISGFLLGFVLLFKP), and 294-314 (IICLLVFCGILAGVLLAACWG).

The protein belongs to the peptidase S54 family. As to expression, expressed in pollen mother cell.

Its subcellular location is the golgi apparatus membrane. Functionally, probable inactive rhomboid-type serine protease. Its function is as follows. Probably essential for the meiosis stage-specific callose accumulation and pollen exine formation. This chain is Inactive RHOMBOID-like protein 8, found in Arabidopsis thaliana (Mouse-ear cress).